A 154-amino-acid polypeptide reads, in one-letter code: 3-hydroxyacyl-[acyl-carrier-protein] dehydratase FabZ (154 aa).

H57 is a catalytic residue.

Belongs to the thioester dehydratase family. FabZ subfamily.

The protein resides in the cytoplasm. It carries out the reaction a (3R)-hydroxyacyl-[ACP] = a (2E)-enoyl-[ACP] + H2O. Functionally, involved in unsaturated fatty acids biosynthesis. Catalyzes the dehydration of short chain beta-hydroxyacyl-ACPs and long chain saturated and unsaturated beta-hydroxyacyl-ACPs. The chain is 3-hydroxyacyl-[acyl-carrier-protein] dehydratase FabZ from Sinorhizobium medicae (strain WSM419) (Ensifer medicae).